The primary structure comprises 242 residues: Neuromodulin (242 aa).

Positions 1–242 (MLCCMRRTKQ…EEREADQEHA (242 aa)) are disordered. 2 S-palmitoyl cysteine lipidation sites follow: C3 and C4. Basic and acidic residues predominate over residues 9–32 (KQVEKNDEDQKIEQDGIKPEDKAH). The 30-residue stretch at 31 to 60 (AHKAATKIQASFRGHITRKKLKGEKKGDAQ) folds into the IQ domain. S41 is subject to Phosphoserine; by PHK and PKC. Basic and acidic residues-rich tracts occupy residues 66–84 (GNEK…KEGE) and 98–117 (KAEE…KGEG). The segment covering 142-157 (ETESATKASTDNSPSS) has biased composition (polar residues). Phosphoserine occurs at positions 154, 156, and 157. Over residues 158–170 (KAEDAPAKEEPKQ) the composition is skewed to basic and acidic residues. The span at 171-203 (ADVPAAVTAAAAATTPAAEDAAAKATAQPPTDA) shows a compositional bias: low complexity. T185 bears the Phosphothreonine mark. Residues S206 and S207 each carry the phosphoserine; by CK2 modification. Residues 209–242 (AEEKIEAVDETKPKESARQDEGKGEEREADQEHA) are compositionally biased toward basic and acidic residues.

Belongs to the neuromodulin family. Identified in a complex containing FGFR4, NCAM1, CDH2, PLCG1, FRS2, SRC, SHC1, GAP43 and CTTN. Interacts (via IQ domain) with calmodulin. Binds calmodulin with a greater affinity in the absence of Ca(2+) than in its presence. Post-translationally, phosphorylated. Phosphorylation of this protein by a protein kinase C is specifically correlated with certain forms of synaptic plasticity. Palmitoylated by ZDHHC3. Palmitoylation is regulated by ARF6 and is essential for plasma membrane association and axonal and dendritic filopodia induction. Deacylated by LYPLA2.

The protein localises to the cell membrane. The protein resides in the cell projection. It localises to the growth cone membrane. Its subcellular location is the synapse. It is found in the filopodium membrane. The protein localises to the perikaryon. The protein resides in the dendrite. It localises to the axon. Its subcellular location is the cytoplasm. This protein is associated with nerve growth. It is a major component of the motile 'growth cones' that form the tips of elongating axons. Plays a role in axonal and dendritic filopodia induction. In Felis catus (Cat), this protein is Neuromodulin (GAP43).